Reading from the N-terminus, the 348-residue chain is Uroporphyrinogen decarboxylase (348 aa).

Substrate contacts are provided by residues 28–32, Asp78, Tyr154, Thr209, and His325; that span reads RQAGR.

This sequence belongs to the uroporphyrinogen decarboxylase family. In terms of assembly, homodimer.

It is found in the cytoplasm. It catalyses the reaction uroporphyrinogen III + 4 H(+) = coproporphyrinogen III + 4 CO2. The protein operates within porphyrin-containing compound metabolism; protoporphyrin-IX biosynthesis; coproporphyrinogen-III from 5-aminolevulinate: step 4/4. In terms of biological role, catalyzes the decarboxylation of four acetate groups of uroporphyrinogen-III to yield coproporphyrinogen-III. The sequence is that of Uroporphyrinogen decarboxylase from Rhodopseudomonas palustris (strain BisA53).